A 306-amino-acid polypeptide reads, in one-letter code: MADQLVRATAAQGRIRAVGVLSTRLTEEARGRHKLSYVATAALGRTMAAGLLIASNFKQTEARVNLRLQGDGPLGGILVDAGADGTVRGYVKNPQVELPPSPKGKLDVGRAVGANGFLYVVKDLGYGYPFSGTTELVSGEIGDDVTHYLVTSEQVASALMLGVFVGADGVDAAGGLLLQVMPSADGQEDEELAATLERRLASVEGFTPLVRSGKRIPQILEELLGDMGLEIFPEVQLVRFHCHCSPQRVLGALKMMGEAELLDMIEKDGGAEATCHFCNQVYQVKASELETLVEQLRSEREVSSQE.

2 cysteine pairs are disulfide-bonded: cysteine 242/cysteine 244 and cysteine 275/cysteine 278.

This sequence belongs to the HSP33 family. In terms of processing, under oxidizing conditions two disulfide bonds are formed involving the reactive cysteines. Under reducing conditions zinc is bound to the reactive cysteines and the protein is inactive.

The protein localises to the cytoplasm. Its function is as follows. Redox regulated molecular chaperone. Protects both thermally unfolding and oxidatively damaged proteins from irreversible aggregation. Plays an important role in the bacterial defense system toward oxidative stress. This chain is 33 kDa chaperonin, found in Gloeobacter violaceus (strain ATCC 29082 / PCC 7421).